The chain runs to 250 residues: Cell division protein ZapD (250 aa).

It belongs to the ZapD family. Interacts with FtsZ.

It is found in the cytoplasm. In terms of biological role, cell division factor that enhances FtsZ-ring assembly. Directly interacts with FtsZ and promotes bundling of FtsZ protofilaments, with a reduction in FtsZ GTPase activity. This chain is Cell division protein ZapD, found in Pectobacterium carotovorum subsp. carotovorum (strain PC1).